We begin with the raw amino-acid sequence, 341 residues long: MKDLLRQENNEVADITIIGAGPIGLYAAFYAGLRTMKARVVDSLPQIGGQLTALYPKKAIYDVAGYPKIVAEALIANLAIQASQYHPEILTSTQITEIHRNGALFELFSEDGRQFLSKTVLIAAGVGAFAPRKLPMEEAVKWEGNGLFYFVQDPTVFFGKKVLIIGGGDSALDWAMALMANAEVTLIHRRDKFTAHEDSVEKVRKSPANIKTFYELKSIVGKDSPQGKELHKVVIFNNKTNEETTLEVDAILCNLGFSTNLGPIKNWGVEILNNAVKVDVNMATNVTGIYAAGDIVWHPAKLKLIATGFAEAAIAINNAKTIVEPHANFFPGHSSSSKEKK.

Residues Asp42, Gln50, Tyr55, Ile95, Phe129, Asp294, and Ser335 each contribute to the FAD site.

It belongs to the ferredoxin--NADP reductase type 2 family. Homodimer. Requires FAD as cofactor.

The enzyme catalyses 2 reduced [2Fe-2S]-[ferredoxin] + NADP(+) + H(+) = 2 oxidized [2Fe-2S]-[ferredoxin] + NADPH. The sequence is that of Ferredoxin--NADP reductase 2 from Chloroherpeton thalassium (strain ATCC 35110 / GB-78).